The chain runs to 205 residues: Putative C-type lectin protein FPV001/FPV260 (205 aa).

The C-type lectin domain occupies 84–187 (CPRDWISHNG…CSVRRYLVCK (104 aa)).

The polypeptide is Putative C-type lectin protein FPV001/FPV260 (Fowlpox virus (strain NVSL) (FPV)).